The sequence spans 338 residues: Ketol-acid reductoisomerase (NADP(+)) (338 aa).

Positions 1–181 (MKVYYDKDAD…GGTRGGVIET (181 aa)) constitute a KARI N-terminal Rossmann domain. NADP(+)-binding positions include 24–27 (YGSQ), R47, and S52. H107 is a catalytic residue. NADP(+) is bound at residue G133. The KARI C-terminal knotted domain occupies 182 to 327 (TFKEETETDL…AKLRDMMPWI (146 aa)). 4 residues coordinate Mg(2+): D190, E194, E226, and E230. Position 251 (S251) interacts with substrate.

Belongs to the ketol-acid reductoisomerase family. Mg(2+) serves as cofactor.

It catalyses the reaction (2R)-2,3-dihydroxy-3-methylbutanoate + NADP(+) = (2S)-2-acetolactate + NADPH + H(+). It carries out the reaction (2R,3R)-2,3-dihydroxy-3-methylpentanoate + NADP(+) = (S)-2-ethyl-2-hydroxy-3-oxobutanoate + NADPH + H(+). It participates in amino-acid biosynthesis; L-isoleucine biosynthesis; L-isoleucine from 2-oxobutanoate: step 2/4. The protein operates within amino-acid biosynthesis; L-valine biosynthesis; L-valine from pyruvate: step 2/4. Its function is as follows. Involved in the biosynthesis of branched-chain amino acids (BCAA). Catalyzes an alkyl-migration followed by a ketol-acid reduction of (S)-2-acetolactate (S2AL) to yield (R)-2,3-dihydroxy-isovalerate. In the isomerase reaction, S2AL is rearranged via a Mg-dependent methyl migration to produce 3-hydroxy-3-methyl-2-ketobutyrate (HMKB). In the reductase reaction, this 2-ketoacid undergoes a metal-dependent reduction by NADPH to yield (R)-2,3-dihydroxy-isovalerate. This Nitrosomonas europaea (strain ATCC 19718 / CIP 103999 / KCTC 2705 / NBRC 14298) protein is Ketol-acid reductoisomerase (NADP(+)).